A 439-amino-acid polypeptide reads, in one-letter code: Protein translocase subunit SecY (439 aa).

10 helical membrane passes run 19-39, 68-88, 116-136, 151-171, 176-196, 216-236, 269-289, 312-332, 373-393, and 396-416; these read ILFT…TAPG, YSLF…VQLL, YITL…FQAM, LMIG…GEQI, FGSG…PSAI, WIFV…TTFV, VIPV…LQFL, WTGM…YSFV, VGSL…NVWG, and KIVA…IQAV.

The protein belongs to the SecY/SEC61-alpha family. As to quaternary structure, component of the Sec protein translocase complex. Heterotrimer consisting of SecY, SecE and SecG subunits. The heterotrimers can form oligomers, although 1 heterotrimer is thought to be able to translocate proteins. Interacts with the ribosome. Interacts with SecDF, and other proteins may be involved. Interacts with SecA.

The protein localises to the cell membrane. The central subunit of the protein translocation channel SecYEG. Consists of two halves formed by TMs 1-5 and 6-10. These two domains form a lateral gate at the front which open onto the bilayer between TMs 2 and 7, and are clamped together by SecE at the back. The channel is closed by both a pore ring composed of hydrophobic SecY resides and a short helix (helix 2A) on the extracellular side of the membrane which forms a plug. The plug probably moves laterally to allow the channel to open. The ring and the pore may move independently. The sequence is that of Protein translocase subunit SecY from Lactococcus lactis subsp. cremoris (Streptococcus cremoris).